Consider the following 240-residue polypeptide: Probable transcriptional regulatory protein jhp_0149 (240 aa).

This sequence belongs to the TACO1 family.

It is found in the cytoplasm. The chain is Probable transcriptional regulatory protein jhp_0149 from Helicobacter pylori (strain J99 / ATCC 700824) (Campylobacter pylori J99).